Here is a 392-residue protein sequence, read N- to C-terminus: MHNPTPRTESPSALAFIKRFFAAEAAGGLILMAAALAALIVANSPLADSYFAALHTVLAGMSVEHWINDGLMAIFFMLVGLEIKREMLAGQLASWSQRALPGFAALGGMVVPALIYVAFNWGQPDTIGGWAIPAATDIAFALGVLSLLGKRVPLSLKIFLSALAILDDLGAVLIIALFYTSDLSIPMLLAALGSIAVLVALNRLSVKKLLPYLIVGALLWFFMLQSGIHATLAGVALALCIPLGKPDEEASSPLLHLEEKLHPWVAFAVVPVFGFANAGVSLSGITVDKLLDPVPLGVALGLLIGKQVGIFALAALAIRAGLARLPDGSNWGQLYGVAALCGIGFTMSLFIGALAFPGAPELVDEVKVGVLIGSVLSALLGVVVLRRFGARG.

A run of 11 helical transmembrane segments spans residues 20–40 (FFAA…AALI), 63–83 (VEHW…GLEI), 99–119 (ALPG…YVAF), 127–147 (IGGW…VLSL), 158–178 (IFLS…IALF), 181–201 (SDLS…LVAL), 209–229 (LLPY…SGIH), 265–285 (VAFA…LSGI), 298–318 (VALG…ALAI), 336–356 (GVAA…ALAF), and 365–385 (EVKV…VVVL).

It belongs to the NhaA Na(+)/H(+) (TC 2.A.33) antiporter family.

It is found in the cell inner membrane. The enzyme catalyses Na(+)(in) + 2 H(+)(out) = Na(+)(out) + 2 H(+)(in). Na(+)/H(+) antiporter that extrudes sodium in exchange for external protons. This Pseudomonas savastanoi pv. phaseolicola (strain 1448A / Race 6) (Pseudomonas syringae pv. phaseolicola (strain 1448A / Race 6)) protein is Na(+)/H(+) antiporter NhaA 2.